A 228-amino-acid polypeptide reads, in one-letter code: LexA repressor (228 aa).

A DNA-binding region (H-T-H motif) is located at residues 26 to 46; that stretch reads FDEMKEALDLRSKSGIHRLIT. Active-site for autocatalytic cleavage activity residues include Ser-149 and Lys-187.

Belongs to the peptidase S24 family. As to quaternary structure, homodimer.

The enzyme catalyses Hydrolysis of Ala-|-Gly bond in repressor LexA.. In terms of biological role, represses a number of genes involved in the response to DNA damage (SOS response), including recA and lexA. In the presence of single-stranded DNA, RecA interacts with LexA causing an autocatalytic cleavage which disrupts the DNA-binding part of LexA, leading to derepression of the SOS regulon and eventually DNA repair. This chain is LexA repressor, found in Jannaschia sp. (strain CCS1).